The primary structure comprises 955 residues: Thyroid hormone receptor-associated protein 3 (955 aa).

Positions 1 to 94 are disordered; that stretch reads MSKTNKSKSG…YFRGRNRGFY (94 aa). Residue Ser2 is modified to N-acetylserine. The tract at residues 2–190 is required for mRNA splicing activation; sequence SKTNKSKSGS…KSSSKDSRPS (189 aa). Positions 14–51 are enriched in basic residues; that stretch reads SRSRSASRSRSRSFSKSRSRSRSLSRSRKRRLSSRSRS. Dimethylated arginine is present on Arg17. The segment covering 58–75 has biased composition (basic and acidic residues); that stretch reads HNRERNHPRVYQNRDFRG. Arg66 is modified (asymmetric dimethylarginine). A compositionally biased stretch (low complexity) spans 82-94; the sequence is RPYYFRGRNRGFY. Asymmetric dimethylarginine occurs at positions 101 and 108. Residues 117–559 are disordered; it reads AYSPRRGRSR…AKGDFPTGKS (443 aa). Residues 121–143 are compositionally biased toward basic residues; sequence RRGRSRSRSPKRRSPSPRSRSHS. Over residues 144 to 155 the composition is skewed to basic and acidic residues; that stretch reads RNSDKSSSDRSR. Low complexity predominate over residues 157–166; the sequence is SSSSRSSSNH. Residues 167 to 188 are compositionally biased toward basic and acidic residues; sequence SRVESSKRKSAKEKKSSSKDSR. Residue Lys202 forms a Glycyl lysine isopeptide (Lys-Gly) (interchain with G-Cter in SUMO1); alternate linkage. Lys202 is covalently cross-linked (Glycyl lysine isopeptide (Lys-Gly) (interchain with G-Cter in SUMO2); alternate). Over residues 204–220 the composition is skewed to polar residues; the sequence is QTFSGGTSQDTKASESS. A Glycyl lysine isopeptide (Lys-Gly) (interchain with G-Cter in SUMO2) cross-link involves residue Lys215. Ser220 is subject to Phosphoserine. Lys221 is covalently cross-linked (Glycyl lysine isopeptide (Lys-Gly) (interchain with G-Cter in SUMO2); alternate). Lys221 bears the N6-acetyllysine; alternate mark. Phosphoserine occurs at positions 232, 237, 240, 243, and 248. Lys252 is covalently cross-linked (Glycyl lysine isopeptide (Lys-Gly) (interchain with G-Cter in SUMO2); alternate). Lys252 is modified (N6-methyllysine; alternate). A phosphoserine mark is found at Ser253 and Ser257. The span at 266-276 shows a compositional bias: pro residues; it reads RPSPVPKPSPP. Polar residues predominate over residues 282-300; it reads QMGSTLPSGAGYQSGTHQG. Residues 305 to 331 show a composition bias toward low complexity; it reads GSGSLSPSKKSPVGKSPPSTGSTYGSS. Phosphoserine occurs at positions 315, 320, and 323. Thr324 carries the phosphothreonine modification. Residue Ser326 is modified to Phosphoserine. Position 328 is a phosphotyrosine (Tyr328). Residue Lys333 forms a Glycyl lysine isopeptide (Lys-Gly) (interchain with G-Cter in SUMO2) linkage. A Phosphoserine modification is found at Ser339. Residue Lys346 forms a Glycyl lysine isopeptide (Lys-Gly) (interchain with G-Cter in SUMO2); alternate linkage. N6-acetyllysine; alternate is present on Lys346. A compositionally biased stretch (basic and acidic residues) spans 347 to 377; it reads RYLEEQKTENGKDKEQKQTNTDKEKIKEKGS. Residues Lys353 and Lys375 each participate in a glycyl lysine isopeptide (Lys-Gly) (interchain with G-Cter in SUMO2) cross-link. The required for mRNA decay activity stretch occupies residues 359–955; sequence DKEQKQTNTD…EKDNIQPTTE (597 aa). A phosphoserine mark is found at Ser377 and Ser379. Lys387 participates in a covalent cross-link: Glycyl lysine isopeptide (Lys-Gly) (interchain with G-Cter in SUMO1); alternate. Lys387 participates in a covalent cross-link: Glycyl lysine isopeptide (Lys-Gly) (interchain with G-Cter in SUMO2); alternate. Residues Lys389 and Lys396 each participate in a glycyl lysine isopeptide (Lys-Gly) (interchain with G-Cter in SUMO2) cross-link. Thr397 is modified (phosphothreonine). Residue Lys401 forms a Glycyl lysine isopeptide (Lys-Gly) (interchain with G-Cter in SUMO2) linkage. Ser406 and Ser408 each carry phosphoserine. Residues 414-452 are compositionally biased toward basic and acidic residues; that stretch reads LRDDFEKKMADFHKEEMDDQDKDKAKGRKESEFDDEPKF. Residues Lys421 and Lys427 each participate in a glycyl lysine isopeptide (Lys-Gly) (interchain with G-Cter in SUMO2) cross-link. The residue at position 444 (Ser444) is a Phosphoserine. Residue Lys451 forms a Glycyl lysine isopeptide (Lys-Gly) (interchain with G-Cter in SUMO1); alternate linkage. Residues Lys451 and Lys455 each participate in a glycyl lysine isopeptide (Lys-Gly) (interchain with G-Cter in SUMO2); alternate cross-link. Lys455 carries the post-translational modification N6-acetyllysine; alternate. Glycyl lysine isopeptide (Lys-Gly) (interchain with G-Cter in SUMO2) cross-links involve residues Lys461 and Lys467. Phosphoserine is present on Ser468. Glycyl lysine isopeptide (Lys-Gly) (interchain with G-Cter in SUMO2); alternate cross-links involve residues Lys470 and Lys481. N6-acetyllysine; alternate occurs at positions 470 and 481. Lys486 is covalently cross-linked (Glycyl lysine isopeptide (Lys-Gly) (interchain with G-Cter in SUMO2)). Positions 495-521 are enriched in basic and acidic residues; the sequence is FPERSKKEDRGKRSEGGHRGFVPEKNF. Residue Lys519 is modified to N6-acetyllysine. Lys527 participates in a covalent cross-link: Glycyl lysine isopeptide (Lys-Gly) (interchain with G-Cter in SUMO2); alternate. Lys527 carries the post-translational modification N6-acetyllysine; alternate. A Phosphoserine modification is found at Ser535. Residues 540–550 show a composition bias toward basic and acidic residues; that stretch reads KTSESRDKLGA. Lys551 participates in a covalent cross-link: Glycyl lysine isopeptide (Lys-Gly) (interchain with G-Cter in SUMO2). 552-559 is an ATP binding site; that stretch reads GDFPTGKS. Lys558 participates in a covalent cross-link: Glycyl lysine isopeptide (Lys-Gly) (interchain with G-Cter in SUMO2); alternate. Lys558 carries the post-translational modification N6-acetyllysine; alternate. A phosphoserine mark is found at Ser560, Ser562, and Ser575. Lys602 participates in a covalent cross-link: Glycyl lysine isopeptide (Lys-Gly) (interchain with G-Cter in SUMO2). Ser619, Ser622, Ser672, Ser682, and Ser684 each carry phosphoserine. A compositionally biased stretch (basic and acidic residues) spans 663–680; sequence EQEAAKNKKSPEIHRRID. Residues 663 to 955 are disordered; sequence EQEAAKNKKS…EKDNIQPTTE (293 aa). Over residues 691–761 the composition is skewed to basic and acidic residues; sequence LAHDEMKSPR…RSAEKTEKTH (71 aa). Lys697 is covalently cross-linked (Glycyl lysine isopeptide (Lys-Gly) (interchain with G-Cter in SUMO2)). Phosphoserine is present on Ser698. Residues Lys705, Lys709, Lys711, Lys756, and Lys759 each participate in a glycyl lysine isopeptide (Lys-Gly) (interchain with G-Cter in SUMO2) cross-link. Basic residues predominate over residues 762–775; that stretch reads KGSKKQKKHRRARD. Low complexity predominate over residues 779–789; it reads SSSSSSQSSHS. Lys811 carries the N6-acetyllysine modification. Arg845 carries the asymmetric dimethylarginine modification. The segment covering 848–859 has biased composition (low complexity); sequence YSGNNNNNSNND. Thr874 carries the post-translational modification Phosphothreonine. Glycyl lysine isopeptide (Lys-Gly) (interchain with G-Cter in SUMO2) cross-links involve residues Lys876 and Lys879. Residues 881–895 are compositionally biased toward basic and acidic residues; that stretch reads YLHDDREGEGSDKWV. Phosphoserine occurs at positions 928 and 939. Residues 930-940 are compositionally biased toward acidic residues; sequence EEGEIEDDESG.

Belongs to the BCLAF1/THRAP3 family. In terms of assembly, associated with the large multiprotein complex TRAP (Mediator complex-like). Interacts with SFPQ; the interaction is dependent on SFPQ phosphorylation at 'Thr-687' and inhibits binding of SFPQ to an ESS1 exonic splicing silencer element-containing RNA. Interacts with NXF1. Component of the SNARP complex which consists at least of SNIP1, SNW1, THRAP3, BCLAF1 and PNN. Associated with spliced mRNP complexes. Interacts with HELZ2 and PPARG. Interacts with CLOCK and BMAL1. Component of a MACOM-like complex, named WTAP complex, composed of WTAP, ZC3H13, CBLL1, KIAA1429, RBM15, BCLAF1 and THRAP3. Post-translationally, ADP-ribosylation during genotoxic stress promotes accumulation in nuclear speckles. In terms of tissue distribution, ubiquitous.

Its subcellular location is the nucleus. It is found in the nucleoplasm. It localises to the nucleus speckle. Its function is as follows. Involved in pre-mRNA splicing. Remains associated with spliced mRNA after splicing which probably involves interactions with the exon junction complex (EJC). Can trigger mRNA decay which seems to be independent of nonsense-mediated decay involving premature stop codons (PTC) recognition. May be involved in nuclear mRNA decay. Involved in regulation of signal-induced alternative splicing. During splicing of PTPRC/CD45 is proposed to sequester phosphorylated SFPQ from PTPRC/CD45 pre-mRNA in resting T-cells. Involved in cyclin-D1/CCND1 mRNA stability probably by acting as component of the SNARP complex which associates with both the 3'end of the CCND1 gene and its mRNA. Involved in response to DNA damage. Is excluced from DNA damage sites in a manner that parallels transcription inhibition; the function may involve the SNARP complex. Initially thought to play a role in transcriptional coactivation through its association with the TRAP complex; however, it is not regarded as a stable Mediator complex subunit. Cooperatively with HELZ2, enhances the transcriptional activation mediated by PPARG, maybe through the stabilization of the PPARG binding to DNA in presence of ligand. May play a role in the terminal stage of adipocyte differentiation. Plays a role in the positive regulation of the circadian clock. Acts as a coactivator of the CLOCK-BMAL1 heterodimer and promotes its transcriptional activator activity and binding to circadian target genes. In Homo sapiens (Human), this protein is Thyroid hormone receptor-associated protein 3.